We begin with the raw amino-acid sequence, 1265 residues long: 1-phosphatidylinositol 4,5-bisphosphate phosphodiesterase gamma-2 (1265 aa).

Residues 20 to 131 form the PH domain; it reads RALELGTVMT…WLSGLKILHQ (112 aa). The PI-PLC X-box domain maps to 312-456; the sequence is QDMNNPLSHY…LREKIIIKHK (145 aa). Active-site residues include H327 and H372. 2 SH2 domains span residues 532–635 and 646–735; these read WFHK…TDPV and WYYD…RYPV. Y753 and Y759 each carry phosphotyrosine; by BTK. The region spanning 769 to 829 is the SH3 domain; the sequence is MPQRTVKALY…PSNYVEDIST (61 aa). Residues 930-1044 enclose the PI-PLC Y-box domain; that stretch reads LSDLVVYCKP…GYVLQPESMR (115 aa). The 132-residue stretch at 1038-1169 folds into the C2 domain; that stretch reads LQPESMRTEK…SGFRSVPLKN (132 aa). Y1197 carries the post-translational modification Phosphotyrosine; by BTK. A phosphotyrosine mark is found at Y1217 and Y1245.

In terms of assembly, part of a complex composed of EEIG1, TNFRSF11A/RANK, PLCG2, GAB2, TEC and BTK; complex formation increases in the presence of TNFSF11/RANKL. Interacts (via SH2 domain) with CSF1R (tyrosine phosphorylated). Interacts constitutively with THEMIS2. The cofactor is Ca(2+). Phosphorylated on tyrosine residues by CSF1R. Phosphorylated on tyrosine residues by BTK and SYK; upon ligand-induced activation of a variety of growth factor receptors and immune system receptors. Phosphorylation leads to increased phospholipase activity.

It localises to the membrane raft. The catalysed reaction is a 1,2-diacyl-sn-glycero-3-phospho-(1D-myo-inositol-4,5-bisphosphate) + H2O = 1D-myo-inositol 1,4,5-trisphosphate + a 1,2-diacyl-sn-glycerol + H(+). Its function is as follows. The production of the second messenger molecules diacylglycerol (DAG) and inositol 1,4,5-trisphosphate (IP3) is mediated by activated phosphatidylinositol-specific phospholipase C enzymes. It is a crucial enzyme in transmembrane signaling. The polypeptide is 1-phosphatidylinositol 4,5-bisphosphate phosphodiesterase gamma-2 (Homo sapiens (Human)).